The chain runs to 282 residues: Bifunctional protein FolD (282 aa).

NADP(+) contacts are provided by residues 165–167, serine 190, and isoleucine 231; that span reads NRS.

The protein belongs to the tetrahydrofolate dehydrogenase/cyclohydrolase family. Homodimer.

It carries out the reaction (6R)-5,10-methylene-5,6,7,8-tetrahydrofolate + NADP(+) = (6R)-5,10-methenyltetrahydrofolate + NADPH. It catalyses the reaction (6R)-5,10-methenyltetrahydrofolate + H2O = (6R)-10-formyltetrahydrofolate + H(+). It participates in one-carbon metabolism; tetrahydrofolate interconversion. Its function is as follows. Catalyzes the oxidation of 5,10-methylenetetrahydrofolate to 5,10-methenyltetrahydrofolate and then the hydrolysis of 5,10-methenyltetrahydrofolate to 10-formyltetrahydrofolate. The sequence is that of Bifunctional protein FolD from Clostridium botulinum (strain Langeland / NCTC 10281 / Type F).